The sequence spans 260 residues: Phosphate import ATP-binding protein PstB (260 aa).

An ABC transporter domain is found at 13–255; it reads MRAQGVNVFY…PKQERTKDYI (243 aa). An ATP-binding site is contributed by 45–52; that stretch reads GPSGCGKS.

This sequence belongs to the ABC transporter superfamily. Phosphate importer (TC 3.A.1.7) family. In terms of assembly, the complex is composed of two ATP-binding proteins (PstB), two transmembrane proteins (PstC and PstA) and a solute-binding protein (PstS).

It localises to the cell inner membrane. It carries out the reaction phosphate(out) + ATP + H2O = ADP + 2 phosphate(in) + H(+). Part of the ABC transporter complex PstSACB involved in phosphate import. Responsible for energy coupling to the transport system. The sequence is that of Phosphate import ATP-binding protein PstB from Sphingopyxis alaskensis (strain DSM 13593 / LMG 18877 / RB2256) (Sphingomonas alaskensis).